A 336-amino-acid polypeptide reads, in one-letter code: Vomeronasal type-1 receptor 102 (336 aa).

The Extracellular segment spans residues M1–T42. A helical membrane pass occupies residues F43–F63. Residues K64–D75 lie on the Cytoplasmic side of the membrane. A helical membrane pass occupies residues L76 to A96. The Extracellular segment spans residues T97–T120. Residues C111 and C198 are joined by a disulfide bond. Residues F121–L140 form a helical membrane-spanning segment. Residues S141–H157 lie on the Cytoplasmic side of the membrane. A helical transmembrane segment spans residues I158–L178. The Extracellular segment spans residues S179–T213. Residue N185 is glycosylated (N-linked (GlcNAc...) asparagine). Residues L214 to V234 form a helical membrane-spanning segment. The Cytoplasmic portion of the chain corresponds to A235 to R264. A helical membrane pass occupies residues S265 to C285. The Extracellular portion of the chain corresponds to S286 to S296. Residues Y297 to I317 form a helical membrane-spanning segment. Topologically, residues T318–V336 are cytoplasmic.

This sequence belongs to the G-protein coupled receptor 1 family. Expressed in 1-4% of neurons of the vomeronasal organ. Only one pheromone receptor gene may be expressed in a particular neuron. Not expressed in the main olfactory epithelium.

The protein localises to the cell membrane. Functionally, putative pheromone receptor implicated in the regulation of social as well as reproductive behavior. In Rattus norvegicus (Rat), this protein is Vomeronasal type-1 receptor 102 (Vom1r102).